We begin with the raw amino-acid sequence, 302 residues long: Ribonuclease HII (302 aa).

Residues 53–297 (EFEIGVDEVG…VQQAIEGTLA (245 aa)) form the RNase H type-2 domain. Residues aspartate 59, glutamate 60, and aspartate 163 each contribute to the a divalent metal cation site.

The protein belongs to the RNase HII family. It depends on Mn(2+) as a cofactor. Requires Mg(2+) as cofactor.

It localises to the cytoplasm. It catalyses the reaction Endonucleolytic cleavage to 5'-phosphomonoester.. Endonuclease that specifically degrades the RNA of RNA-DNA hybrids. This Psychrobacter sp. (strain PRwf-1) protein is Ribonuclease HII.